The sequence spans 798 residues: Phenylalanine--tRNA ligase beta subunit (798 aa).

A tRNA-binding domain is found at 38-148 (IGNYEKVVVG…PEAPVGEKIE (111 aa)). Positions 400 to 475 (FTPKVIAVSL…RYLGYNNFPD (76 aa)) constitute a B5 domain. Mg(2+) is bound by residues Asp-453, Asp-459, Glu-462, and Glu-463. The region spanning 703-796 (SPYPEVKRDI…LEAKTGAKLR (94 aa)) is the FDX-ACB domain.

Belongs to the phenylalanyl-tRNA synthetase beta subunit family. Type 1 subfamily. Tetramer of two alpha and two beta subunits. The cofactor is Mg(2+).

The protein localises to the cytoplasm. The enzyme catalyses tRNA(Phe) + L-phenylalanine + ATP = L-phenylalanyl-tRNA(Phe) + AMP + diphosphate + H(+). In Carboxydothermus hydrogenoformans (strain ATCC BAA-161 / DSM 6008 / Z-2901), this protein is Phenylalanine--tRNA ligase beta subunit.